The primary structure comprises 426 residues: O-methyltransferase pyvH (426 aa).

S-adenosyl-L-methionine is bound by residues 258–259, Asp281, 308–309, and Arg323; these read GG and DF. His327 functions as the Proton acceptor in the catalytic mechanism.

This sequence belongs to the class I-like SAM-binding methyltransferase superfamily. Cation-independent O-methyltransferase family.

It functions in the pathway secondary metabolite biosynthesis. In terms of biological role, O-methyltransferase; part of the gene cluster that mediates the biosynthesis of pyranoviolin A, a pyranonigrin analog with a C-3 methoxy group. Initially, the PKS portion of pyvA synthesizes C-10 carbon chain from 5 molecules of malonyl-CoA, which is then condensed with the thiolation (T) domain-bound glycine activated by the adenylation (A) domain. The subsequent chain release by Dieckmann condensation (DKC) could be catalyzed by the TE domain present at the C-terminus of pyvA and/or the alpha/beta hydrolase pyvD, installing the tetramic acid moiety. The FAD-dependent monooxygenase pyvC next epoxidizes one of the olefins of the polyketide part, and the epoxide ring-opening induces the dihydro-gamma-pyrone ring formation. The cytochrome P450 monooxygeanse pyvB would be responsible for the 2 consecutive reactions, in which the dihydro-gamma-pyrone is oxidized to gamma-pyrone and C-7 is hydroxylated to yield pyranonigrin F. Finally, the O-methyltransferase pyvH methylates the C-3 hydroxy group to complete the biosynthesis. The protein is O-methyltransferase pyvH of Aspergillus violaceofuscus (strain CBS 115571).